Here is a 313-residue protein sequence, read N- to C-terminus: Olfactory receptor 8C8 (313 aa).

At 1 to 27 the chain is on the extracellular side; it reads MMQITMENKSSVSEFILMGLTDQPELQ. An N-linked (GlcNAc...) asparagine glycan is attached at Asn8. A helical membrane pass occupies residues 28–48; sequence LPLFVLFLMNYTATVMGNLTL. The Cytoplasmic portion of the chain corresponds to 49–59; it reads MNLICLNSNLH. Residues 60-80 traverse the membrane as a helical segment; the sequence is TPMYFFLFNLSFIDFCYSMVF. Topologically, residues 81–96 are extracellular; the sequence is TPKMLMSFILEKNTIS. Residues 97–117 form a helical membrane-spanning segment; it reads FGGCMAQLFFFLFFVNSESYV. Cys100 and Cys192 are disulfide-bonded. Residues 118–136 lie on the Cytoplasmic side of the membrane; sequence LTAMAYDRYVAICKPLTYK. Residues 137–157 form a helical membrane-spanning segment; the sequence is VIMSPKICCLLIFSSYLMGFA. The Extracellular segment spans residues 158 to 208; sequence SAMAHTGCMIRLSFCDSNIINHYMCDIFPLLPLSCSSTYVNELMSSVVVGS. The chain crosses the membrane as a helical span at residues 209-229; sequence AIILCCLIILISYAMILFNII. Residues 230–239 are Cytoplasmic-facing; sequence HMSSGKGWSK. Residues 240-260 form a helical membrane-spanning segment; it reads ALGTCGSHIITVSLFYGSGLL. The Extracellular portion of the chain corresponds to 261-274; sequence AYVKPSSAKTVGQG. A helical membrane pass occupies residues 275–295; that stretch reads KFFSVFYTLLVPMLNPLIYSL. The Cytoplasmic portion of the chain corresponds to 296-313; sequence RNKDVKLAVKKTWKRITS.

It belongs to the G-protein coupled receptor 1 family. In terms of tissue distribution, expressed in neurons in the olfactory epithelium.

Its subcellular location is the cell membrane. Functionally, potential odorant receptor. This Mus musculus (Mouse) protein is Olfactory receptor 8C8.